Here is a 509-residue protein sequence, read N- to C-terminus: ATP synthase subunit alpha (509 aa).

Position 169–176 (169–176) interacts with ATP; sequence GDRQTGKT.

It belongs to the ATPase alpha/beta chains family. As to quaternary structure, F-type ATPases have 2 components, CF(1) - the catalytic core - and CF(0) - the membrane proton channel. CF(1) has five subunits: alpha(3), beta(3), gamma(1), delta(1), epsilon(1). CF(0) has three main subunits: a(1), b(2) and c(9-12). The alpha and beta chains form an alternating ring which encloses part of the gamma chain. CF(1) is attached to CF(0) by a central stalk formed by the gamma and epsilon chains, while a peripheral stalk is formed by the delta and b chains.

Its subcellular location is the cell inner membrane. It catalyses the reaction ATP + H2O + 4 H(+)(in) = ADP + phosphate + 5 H(+)(out). In terms of biological role, produces ATP from ADP in the presence of a proton gradient across the membrane. The alpha chain is a regulatory subunit. This is ATP synthase subunit alpha from Brucella ovis (strain ATCC 25840 / 63/290 / NCTC 10512).